The following is a 453-amino-acid chain: Kynurenine 3-monooxygenase (453 aa).

It belongs to the aromatic-ring hydroxylase family. KMO subfamily. FAD is required as a cofactor.

The catalysed reaction is L-kynurenine + NADPH + O2 + H(+) = 3-hydroxy-L-kynurenine + NADP(+) + H2O. Its pathway is cofactor biosynthesis; NAD(+) biosynthesis; quinolinate from L-kynurenine: step 1/3. Functionally, catalyzes the hydroxylation of L-kynurenine (L-Kyn) to form 3-hydroxy-L-kynurenine (L-3OHKyn). Required for synthesis of quinolinic acid. The sequence is that of Kynurenine 3-monooxygenase from Salinispora tropica (strain ATCC BAA-916 / DSM 44818 / JCM 13857 / NBRC 105044 / CNB-440).